We begin with the raw amino-acid sequence, 443 residues long: ATP-dependent protease ATPase subunit HslU (443 aa).

ATP contacts are provided by residues Val18, 60-65, Asp256, Glu321, and Arg393; that span reads GVGKTE.

It belongs to the ClpX chaperone family. HslU subfamily. In terms of assembly, a double ring-shaped homohexamer of HslV is capped on each side by a ring-shaped HslU homohexamer. The assembly of the HslU/HslV complex is dependent on binding of ATP.

The protein localises to the cytoplasm. In terms of biological role, ATPase subunit of a proteasome-like degradation complex; this subunit has chaperone activity. The binding of ATP and its subsequent hydrolysis by HslU are essential for unfolding of protein substrates subsequently hydrolyzed by HslV. HslU recognizes the N-terminal part of its protein substrates and unfolds these before they are guided to HslV for hydrolysis. This Azoarcus sp. (strain BH72) protein is ATP-dependent protease ATPase subunit HslU.